The chain runs to 284 residues: Mediator of RNA polymerase II transcription subunit 4 (284 aa).

Serine 2 bears the N-acetylserine mark. The disordered stretch occupies residues 205–284 (RIPGEEVEET…DLDLFDPDDF (80 aa)). Residues 225-238 (EEQKGQMAKKEGTP) show a composition bias toward basic and acidic residues. Residue threonine 237 is modified to Phosphothreonine; by KIN28. At serine 242 the chain carries Phosphoserine. The segment covering 248-265 (TAKEVGDEADNTKDKEKE) has biased composition (basic and acidic residues). Residues 266-284 (ENNDDALDLDLDLFDPDDF) are compositionally biased toward acidic residues.

Belongs to the Mediator complex subunit 4 family. Component of the Mediator complex, which is composed of at least 21 subunits that form three structurally distinct submodules. The Mediator head module contains MED6, MED8, MED11, SRB4/MED17, SRB5/MED18, ROX3/MED19, SRB2/MED20 and SRB6/MED22, the middle module contains MED1, MED4, NUT1/MED5, MED7, CSE2/MED9, NUT2/MED10, SRB7/MED21 and SOH1/MED31, and the tail module contains MED2, PGD1/MED3, RGR1/MED14, GAL11/MED15 and SIN4/MED16. The head and the middle modules interact directly with RNA polymerase II, whereas the elongated tail module interacts with gene-specific regulatory proteins. MED4 interacts directly with MED1, MED7 and SRB7/MED21.

The protein resides in the nucleus. Functionally, component of the Mediator complex, a coactivator involved in the regulated transcription of nearly all RNA polymerase II-dependent genes. Mediator functions as a bridge to convey information from gene-specific regulatory proteins to the basal RNA polymerase II transcription machinery. The Mediator complex, having a compact conformation in its free form, is recruited to promoters by direct interactions with regulatory proteins and serves for the assembly of a functional preinitiation complex with RNA polymerase II and the general transcription factors. The Mediator complex unfolds to an extended conformation and partially surrounds RNA polymerase II, specifically interacting with the unphosphorylated form of the C-terminal domain (CTD) of RNA polymerase II. The Mediator complex dissociates from the RNA polymerase II holoenzyme and stays at the promoter when transcriptional elongation begins. The sequence is that of Mediator of RNA polymerase II transcription subunit 4 (MED4) from Saccharomyces cerevisiae (strain ATCC 204508 / S288c) (Baker's yeast).